The following is a 2150-amino-acid chain: Zinc finger protein sdc-3 (2150 aa).

The interval 443–987 (QEITSPMFAL…DQVENEEPER (545 aa)) is dosage compensation domain 1. Disordered regions lie at residues 874 to 894 (EKEWHEMRAAQRAQKEKEEED), 1261 to 1373 (GSVV…GPEV), 1411 to 1448 (FETSPVPAPEGNIPSRAHSSDDDVQVISSETDPNGPIN), and 1491 to 1670 (EVLQ…SEKL). A compositionally biased stretch (polar residues) spans 1267-1293 (TNQQEENVTSEGPTLQEGSSIPSSSHI). The segment covering 1321–1333 (KKSGKTTRGRPKK) has biased composition (basic residues). Basic and acidic residues predominate over residues 1347-1357 (GQKEEAAHEPE). Positions 1504 to 1524 (SSKKRGRRRKKTPPHIAKARK) are enriched in basic residues. The tract at residues 1508–1516 (RGRRRKKTP) is sex determination domain. Over residues 1585 to 1598 (EDLHETERPGHVGE) the composition is skewed to basic and acidic residues. Residues 1638 to 1648 (IQSQAGTNASP) are compositionally biased toward polar residues. 2 consecutive C2H2-type zinc fingers follow at residues 2078–2105 (HKCVQCSIRNQSVYFSSYSLLELHGKLH) and 2117–2141 (DDCQDCYETLTSSFEVIVHRINHHH). Residues 2080 to 2105 (CVQCSIRNQSVYFSSYSLLELHGKLH) form a dosage compensation domain 2 region.

In terms of assembly, component of the SDC complex, which consists of sdc-1, sdc-2 and sdc-3. Within the complex, interacts with sdc-1 and sdc-2. Interacts with dpy-21. Sumoylated. Sumoylation is important for assembly of the dosage compensation complex and its robust binding to the X chromosome. Expressed in somatic and in germline tissues in hermaphrodites (XX). In males (XO), only present in embryos younger than the 100-cell stage (at protein level).

Its subcellular location is the chromosome. It localises to the nucleus. Its function is as follows. Component of the SDC complex that functions in sex determination and in X chromosome dosage compensation specifically in hermaphrodite (XX) animals. Plays a central role in the recruitment of the condensin I-like dosage compensation complex to the male sex-determining autosomal gene her-1, thereby contributing to its repression and initiating hermaphrodite sexual development. Involved in the recruitment and assembly of the dosage compensation complex and the dosage compensation protein dpy-21 onto the X chromosomes in hermaphrodites, which leads to a reduction of X-linked gene transcription and an equalization of X-linked gene expression between the sexes. This chain is Zinc finger protein sdc-3 (sdc-3), found in Caenorhabditis elegans.